The sequence spans 676 residues: Methionine--tRNA ligase (676 aa).

The 'HIGH' region motif lies at 11-21; that stretch reads PYANGPCHLGH. Residues C143, C146, C156, and C159 each contribute to the Zn(2+) site. A 'KMSKS' region motif is present at residues 326 to 330; sequence KMSTS. An ATP-binding site is contributed by T329. The 96-residue stretch at 581-676 folds into the tRNA-binding domain; the sequence is EFGKVKLVVG…TEGNVGEYIK (96 aa).

It belongs to the class-I aminoacyl-tRNA synthetase family. MetG type 1 subfamily. In terms of assembly, homodimer. Zn(2+) is required as a cofactor.

Its subcellular location is the cytoplasm. It carries out the reaction tRNA(Met) + L-methionine + ATP = L-methionyl-tRNA(Met) + AMP + diphosphate. In terms of biological role, is required not only for elongation of protein synthesis but also for the initiation of all mRNA translation through initiator tRNA(fMet) aminoacylation. This Methanosphaera stadtmanae (strain ATCC 43021 / DSM 3091 / JCM 11832 / MCB-3) protein is Methionine--tRNA ligase.